Here is a 404-residue protein sequence, read N- to C-terminus: uncharacterized protein (404 aa).

Residues 1–22 (MASSINNSSQPTVPSISNNSHG) are compositionally biased toward polar residues. The segment at 1–110 (MASSINNSSQ…QQTPVKRRRR (110 aa)) is disordered. Thr-47 carries the phosphothreonine modification. Residues 87–104 (SRGSSLKSHLETESQQTP) are compositionally biased toward polar residues. A PHD-type zinc finger spans residues 117 to 166 (VDYCSACGGRGLFICCEGCPCSFHLSCLEPPLTPENIPEGSWFCVTCSIK).

This is an uncharacterized protein from Schizosaccharomyces pombe (strain 972 / ATCC 24843) (Fission yeast).